The chain runs to 136 residues: Probable disulfide formation protein (136 aa).

A helical membrane pass occupies residues Ser-7–Phe-26. Cysteines 36 and 39 form a disulfide. 2 helical membrane-spanning segments follow: residues Tyr-41 to Glu-60 and Tyr-67 to Phe-84. The cysteines at positions 96 and 101 are disulfide-linked. Residues Ser-109–Thr-131 traverse the membrane as a helical segment.

The protein belongs to the DsbB family. BdbC subfamily.

It is found in the cell inner membrane. Its function is as follows. Required for disulfide bond formation in some proteins. The chain is Probable disulfide formation protein from Chlamydia pneumoniae (Chlamydophila pneumoniae).